Here is a 234-residue protein sequence, read N- to C-terminus: Orotate phosphoribosyltransferase (234 aa).

Lysine 37 serves as a coordination point for 5-phospho-alpha-D-ribose 1-diphosphate. 45–46 (FF) is a binding site for orotate. 5-phospho-alpha-D-ribose 1-diphosphate is bound by residues 83–84 (YK), arginine 109, lysine 110, lysine 113, histidine 115, and 134–142 (DDVISAGTS). Positions 138 and 166 each coordinate orotate.

The protein belongs to the purine/pyrimidine phosphoribosyltransferase family. PyrE subfamily. Homodimer. Mg(2+) serves as cofactor.

It catalyses the reaction orotidine 5'-phosphate + diphosphate = orotate + 5-phospho-alpha-D-ribose 1-diphosphate. It participates in pyrimidine metabolism; UMP biosynthesis via de novo pathway; UMP from orotate: step 1/2. Its function is as follows. Catalyzes the transfer of a ribosyl phosphate group from 5-phosphoribose 1-diphosphate to orotate, leading to the formation of orotidine monophosphate (OMP). In Methylibium petroleiphilum (strain ATCC BAA-1232 / LMG 22953 / PM1), this protein is Orotate phosphoribosyltransferase.